Reading from the N-terminus, the 75-residue chain is Small ribosomal subunit protein bS18 (75 aa).

Belongs to the bacterial ribosomal protein bS18 family. In terms of assembly, part of the 30S ribosomal subunit. Forms a tight heterodimer with protein bS6.

Binds as a heterodimer with protein bS6 to the central domain of the 16S rRNA, where it helps stabilize the platform of the 30S subunit. The protein is Small ribosomal subunit protein bS18 of Laribacter hongkongensis (strain HLHK9).